The sequence spans 2255 residues: Non-reducing polyketide synthase nvfA (2255 aa).

Residues 13 to 251 form an N-terminal acylcarrier protein transacylase domain (SAT) region; sequence ILFGPQSSDM…HHPDHTAAVE (239 aa). In terms of domain architecture, Ketosynthase family 3 (KS3) spans 365-781; it reads VRPIAVTGMA…GSNAAIVLRQ (417 aa). Residues C530, H665, and H704 each act as for beta-ketoacyl synthase activity in the active site. The interval 887–1187 is malonyl-CoA:ACP transacylase (MAT) domain; sequence LCFGGQNGNT…QASDLKSPQA (301 aa). The For acyl/malonyl transferase activity role is filled by S974. The interval 1229–1357 is N-terminal hotdog fold; that stretch reads EPMGLVQVLE…GRISLHPFDS (129 aa). One can recognise a PKS/mFAS DH domain in the interval 1229–1536; that stretch reads EPMGLVQVLE…FTSVSIRALT (308 aa). Positions 1232–1535 are product template (PT) domain; the sequence is GLVQVLEKRP…TFTSVSIRAL (304 aa). Catalysis depends on H1262, which acts as the Proton acceptor; for dehydratase activity. Residues 1385-1536 are C-terminal hotdog fold; the sequence is SSSGLKGSAV…FTSVSIRALT (152 aa). The active-site Proton donor; for dehydratase activity is the D1443. The region spanning 1581–1655 is the Carrier domain; the sequence is TNKFPAIQAM…CLVQAIFPGA (75 aa). The residue at position 1615 (S1615) is an O-(pantetheine 4'-phosphoryl)serine. The interval 1809–2042 is methyltransferase (CMeT) domain; sequence HHASEHTLLR…GYNWVNWSCN (234 aa). A thioesterase (TE) domain region spans residues 2109–2227; that stretch reads LLIHGGGHVM…ILSFYCPTDY (119 aa). The active-site For thioesterase activity is S2194.

It catalyses the reaction 3 malonyl-CoA + acetyl-CoA + 2 S-adenosyl-L-methionine = 3,5-dimethylorsellinate + 2 S-adenosyl-L-homocysteine + 3 CO2 + 4 CoA. The protein operates within secondary metabolite biosynthesis; terpenoid biosynthesis. Functionally, non-reducing polyketide synthase; part of the gene cluster that mediates the biosynthesis of novofumigatonin, a heavily oxygenated meroterpenoid containing a unique orthoester moiety. The first step of the pathway is the synthesis of 3,5-dimethylorsellinic acid (DMOA) by the polyketide synthase nvfA via condensation of one acetyl-CoA starter unit with 3 malonyl-CoA units and 2 methylations. DMOA is then converted to farnesyl-DMOA by the farnesyltransferase nvfB. Epoxydation by FAD-dependent monooxygenase nvfK, followed by a protonation-initiated cyclization catalyzed by the terpene cyclase nvfL leads to the production of asnavolin H. The short chain dehydrogenase nvfC then as a 3-OH dehydrogenase of asnovolin H to yield chemesin D. There are two branches to synthesize asnovolin A from chemesin D. In one branch, chemesin D undergoes Baeyer-Villiger oxidation by nvfH, methylation by nvfJ, and enoyl reduction by the nvfM D enoylreductase that reduces the double bond between C-5'and C-6', to form respectively asnovolin I, asnovolin K, and asnovolin A. In the other branch, the methylation precedes the Baeyer-Villiger oxidation and the enoyl reduction to yield asnovolin A via the asnovolin J intermediate. Asnovolin A is further converted to fumigatonoid A by the Fe(II)/2-oxoglutarate-dependent dioxygenase nvfI that catalyzes an endoperoxidation reaction. The alpha/beta hydrolase nvfD then acts as an epimerase that converts fumigatonoid A to its C-5' epimer, which then undergoes spontaneous or nvfD-catalyzed lactonization. The following step utilizes the ketoreductase nvfG to produce fumigatonoid B. The dioxygenase nvfE further converts fumigatonoid B into fumigatonoid C. Finally the Fe(II)/2-oxoglutarate-dependent dioxygenase nvfF catalyzes two rounds of oxidation to transform fumigatonoid C into the end product, novofumigatonin A. The polypeptide is Non-reducing polyketide synthase nvfA (Aspergillus novofumigatus (strain IBT 16806)).